The chain runs to 367 residues: o-succinylbenzoate synthase (367 aa).

Residue K164 is the Proton donor of the active site. Mg(2+)-binding residues include D189, E214, and D239. The Proton acceptor role is filled by K263.

It belongs to the mandelate racemase/muconate lactonizing enzyme family. MenC type 2 subfamily. In terms of assembly, homodimer. A divalent metal cation serves as cofactor.

The enzyme catalyses (1R,6R)-6-hydroxy-2-succinyl-cyclohexa-2,4-diene-1-carboxylate = 2-succinylbenzoate + H2O. It functions in the pathway quinol/quinone metabolism; 1,4-dihydroxy-2-naphthoate biosynthesis; 1,4-dihydroxy-2-naphthoate from chorismate: step 4/7. The protein operates within quinol/quinone metabolism; menaquinone biosynthesis. In terms of biological role, converts 2-succinyl-6-hydroxy-2,4-cyclohexadiene-1-carboxylate (SHCHC) to 2-succinylbenzoate (OSB). Also acts as a N-succinylamino acid racemase (NSAR) that catalyzes the racemization of N-succinyl-L-phenylglycine. Since the gene is encoded in a menaquinone synthesis operon, OSB synthase is probably the physiological activity. A pathway that requires NSAR activity has not been identified in this species, so whether NSAR is also a biological activity is unknown. The protein is o-succinylbenzoate synthase of Enterococcus faecalis (strain ATCC 700802 / V583).